A 45-amino-acid polypeptide reads, in one-letter code: MITAIIIAKLPEAYTVFRPLVDILPVIPIFFLLLAFVWQAAIGFR.

Positions 1–8 (MITAIIIA) are excised as a propeptide. A helical membrane pass occupies residues 23–43 (ILPVIPIFFLLLAFVWQAAIG).

It belongs to the PsbK family. As to quaternary structure, PSII is composed of 1 copy each of membrane proteins PsbA, PsbB, PsbC, PsbD, PsbE, PsbF, PsbH, PsbI, PsbJ, PsbK, PsbL, PsbM, PsbT, PsbX, PsbY, PsbZ, Psb30/Ycf12, at least 3 peripheral proteins of the oxygen-evolving complex and a large number of cofactors. It forms dimeric complexes.

The protein localises to the plastid. It localises to the chloroplast thylakoid membrane. Its function is as follows. One of the components of the core complex of photosystem II (PSII). PSII is a light-driven water:plastoquinone oxidoreductase that uses light energy to abstract electrons from H(2)O, generating O(2) and a proton gradient subsequently used for ATP formation. It consists of a core antenna complex that captures photons, and an electron transfer chain that converts photonic excitation into a charge separation. The sequence is that of Photosystem II reaction center protein K from Gracilaria tenuistipitata var. liui (Red alga).